A 222-amino-acid chain; its full sequence is Putative RING finger protein ORF118 (222 aa).

Residues 78–114 (CCICMAKNNRKEALPCQHNVCRDCYYKPMRNNCPVCN) form an RING-type zinc finger. Positions 184–222 (IENRIHNNNNNNYDENNPDDLPVIHPPRRRHRQTAHISI) are disordered. Residues 189 to 198 (HNNNNNNYDE) show a composition bias toward low complexity. A compositionally biased stretch (basic residues) spans 209 to 222 (PPRRRHRQTAHISI).

The protein is Putative RING finger protein ORF118 of Magallana gigas (Pacific oyster).